The sequence spans 280 residues: 4-diphosphocytidyl-2-C-methyl-D-erythritol kinase (280 aa).

Residue lysine 9 is part of the active site. Residue 92–102 (PMGGGLGGGSS) coordinates ATP. Residue aspartate 134 is part of the active site.

It belongs to the GHMP kinase family. IspE subfamily.

The enzyme catalyses 4-CDP-2-C-methyl-D-erythritol + ATP = 4-CDP-2-C-methyl-D-erythritol 2-phosphate + ADP + H(+). Its pathway is isoprenoid biosynthesis; isopentenyl diphosphate biosynthesis via DXP pathway; isopentenyl diphosphate from 1-deoxy-D-xylulose 5-phosphate: step 3/6. In terms of biological role, catalyzes the phosphorylation of the position 2 hydroxy group of 4-diphosphocytidyl-2C-methyl-D-erythritol. The polypeptide is 4-diphosphocytidyl-2-C-methyl-D-erythritol kinase (Nitrosococcus oceani (strain ATCC 19707 / BCRC 17464 / JCM 30415 / NCIMB 11848 / C-107)).